The following is a 36-amino-acid chain: Zinc metalloproteinase-disintegrin-like VaH1 (36 aa).

One can recognise a Peptidase M12B domain in the interval 1-36 (MVTKYSSIFMSPILSNPPILYFSDCSREXYQKXLTN).

The protein belongs to the venom metalloproteinase (M12B) family. P-III subfamily. P-IIIa sub-subfamily. In terms of assembly, monomer. Requires Zn(2+) as cofactor. Post-translationally, the N-terminus is blocked. Glycosylated. In terms of tissue distribution, expressed by the venom gland.

It is found in the secreted. Its activity is regulated as follows. Inhibited by EDTA, but not inhibited by iodoacetamide, PMSF and pepstatin A. In terms of biological role, snake venom zinc metalloprotease that exhibits strong hemorrhagic activity. It also degrades alpha-chain of fibrinogen (FGA), but not the beta- and the gamma-chains. Possesses potent azocaseinolytic activity and cleaves insulin B-chain, hydrolyzing it at positions Ala(14)-Leu(15), followed by Tyr(16)-Leu(17) and His(10)-Leu(11). In vivo, subcutaneous injection into mice induces strong hemorrhage. This is Zinc metalloproteinase-disintegrin-like VaH1 from Vipera ammodytes ammodytes (Western sand viper).